Here is a 531-residue protein sequence, read N- to C-terminus: Dimethylnonatriene synthase (531 aa).

The helical transmembrane segment at 6–26 (TMSVAMALAAAIFVVLCSVVA) threads the bilayer. Cys464 is a heme binding site.

It belongs to the cytochrome P450 family. Heme serves as cofactor.

The protein localises to the membrane. It catalyses the reaction (6E,10E)-geranyllinalool + reduced [NADPH--hemoprotein reductase] + O2 = (3E,7E)-4,8,12-trimethyltrideca 1,3,7,11-tetraene + but-3-en-2-one + oxidized [NADPH--hemoprotein reductase] + 2 H2O + H(+). The catalysed reaction is (3S,6E)-nerolidol + reduced [NADPH--hemoprotein reductase] + O2 = (3E)-4,8-dimethylnona-1,3,7-triene + but-3-en-2-one + oxidized [NADPH--hemoprotein reductase] + 2 H2O + H(+). It functions in the pathway secondary metabolite biosynthesis; terpenoid biosynthesis. Its function is as follows. Involved in the biosynthesis of homoterpenes, attractants of herbivores parasitoids and predators (e.g. predatory mites and parasitoid wasps). Component of the volatile terpenes biosynthesis pathways. Converts mainly nerolidol to dimethylnonatriene (DMNT) and, to a lower extent, geranyllinalool to trimethyltridecatetraene (TMTT). The sequence is that of Dimethylnonatriene synthase from Zea mays (Maize).